The chain runs to 168 residues: uncharacterized protein (168 aa).

In terms of domain architecture, PfpI endopeptidase spans 1 to 166; it reads MRVLILAENE…FCGELIKILK (166 aa).

It belongs to the peptidase C56 family.

This is an uncharacterized protein from Archaeoglobus fulgidus (strain ATCC 49558 / DSM 4304 / JCM 9628 / NBRC 100126 / VC-16).